A 341-amino-acid chain; its full sequence is MNIENKCDLAFEVTYHPLYRAAQFWTFIFSTLAVPALFIFLLKQIFPLPFHGNIKFMLISYFLSAFLFAVVLALTFGYHILVPLFITSKCDLIIQPYLFKVGQLSLTLFITLQMIMPFGFSIERIIALRMAKSYENVRTVLGPLLIFVLIGIDLILLFTVFRDESFNDSFISFILIPATTAQTFNSYCWILLYAELGNLLCNCIILLVHSKFKTKFLHQQRSLSVRYELEEISQTSKFTLIVSFTHILFIGWYLGVTIFIRTVGETFFGSYINYTVARGVYISVPTYNLTIVFVGIKALSFMNLKRQNNVQSKVQIKSTGSEGARNYENAIASYWNSVSKA.

A run of 7 helical transmembrane segments spans residues 22–42 (AQFW…IFLL), 66–86 (FLFA…PLFI), 102–122 (GQLS…GFSI), 141–161 (LGPL…FTVF), 188–208 (CWIL…ILLV), 240–260 (LIVS…TIFI), and 279–299 (GVYI…IKAL).

It belongs to the nematode receptor-like protein srb family.

It localises to the membrane. The polypeptide is Serpentine receptor class beta-1 (srb-1) (Caenorhabditis elegans).